The primary structure comprises 306 residues: Protodermal factor 1 (306 aa).

Positions 1 to 23 are cleaved as a signal peptide; sequence MRGMVSFAVWALFAALLSQQLFA. Over residues 40-56 the composition is skewed to low complexity; sequence PPSGSHGTPPSHTPPSS. Residues 40-156 are disordered; sequence PPSGSHGTPP…VVTPPSPIVD (117 aa). Pro residues predominate over residues 62–83; that stretch reads PYDPSPSTPSHPSPPSHTPTPS. The segment covering 84-99 has biased composition (low complexity); sequence TPSHTPTPHTPSHTPT. The segment covering 139 to 154 has biased composition (pro residues); sequence SPPPRTPVVVTPPSPI.

Confined to the shoot apical meristem (SAM) at the layer L1 in vegetative, infloresence and floral meristems, as well as in protoderm of organ primordia, including during embryogenesis. Also present in the tip of emerging lateral root primordia.

Functionally, may be involved in the regulation of meristem growth. In Arabidopsis thaliana (Mouse-ear cress), this protein is Protodermal factor 1 (PDF1).